An 802-amino-acid chain; its full sequence is Copper-exporting P-type ATPase (802 aa).

HMA domains are found at residues 5–70 (KKTT…YGVA) and 72–138 (ETVE…YDAS). Residues C16, C19, C83, and C86 each coordinate Cu(+). A run of 6 helical transmembrane segments spans residues 161–181 (LIIS…HLFN), 192–212 (WFQF…FYVG), 224–244 (MDVL…YEMV), 256–276 (LYFE…YLEA), 411–431 (YFVP…ITLV), and 438–458 (PALV…LGLA). D495 functions as the 4-aspartylphosphate intermediate in the catalytic mechanism. Mg(2+) is bound by residues D690 and D694. 2 consecutive transmembrane segments (helical) span residues 748-767 (LFWA…LGLL) and 771-790 (VAGA…ALRL).

The protein belongs to the cation transport ATPase (P-type) (TC 3.A.3) family. Type IB subfamily.

It localises to the cell membrane. The catalysed reaction is Cu(+)(in) + ATP + H2O = Cu(+)(out) + ADP + phosphate + H(+). Functionally, involved in copper export. The chain is Copper-exporting P-type ATPase (copA) from Staphylococcus aureus (strain COL).